The following is a 152-amino-acid chain: MARMHARRRGIASSVRPYRKEVPAWSNSDVKEIEGKIVELRKAGLTCAQIGLVLRDKHGVPNVKLATGKRINAIVRENDLDTDIPEDLRNLMHKALMMRKHLEQNRKDLHNKRQLQLTEAKVRRLVKYYVGTKRLPLGWVYKPETAEILLSR.

Belongs to the universal ribosomal protein uS15 family. In terms of assembly, part of the 30S ribosomal subunit.

This Methanocorpusculum labreanum (strain ATCC 43576 / DSM 4855 / Z) protein is Small ribosomal subunit protein uS15.